A 241-amino-acid polypeptide reads, in one-letter code: Lysoplasmalogenase TMEM86A (241 aa).

The Cytoplasmic segment spans residues Met1–Pro13. A helical transmembrane segment spans residues Lys14–Leu30. Over Pro31 to Ser36 the chain is Extracellular. The helical transmembrane segment at Trp37 to Val59 threads the bilayer. The Cytoplasmic portion of the chain corresponds to Arg60 to Ser67. The helical transmembrane segment at Ala68–Trp87 threads the bilayer. Over Gln88–Gly96 the chain is Extracellular. A helical membrane pass occupies residues Leu97–Met113. Residues Arg114–Arg119 are Cytoplasmic-facing. A helical transmembrane segment spans residues Thr120 to Tyr136. At Pro137–Ala142 the chain is on the extracellular side. A helical transmembrane segment spans residues Phe143 to Trp159. Over Arg160 to Glu176 the chain is Cytoplasmic. The chain crosses the membrane as a helical span at residues Leu177–Leu195. The Extracellular segment spans residues Asn196 to Arg206. Residues Ala207–Val225 traverse the membrane as a helical segment. Residues Glu226 to Asp241 are Cytoplasmic-facing.

It belongs to the TMEM86 family. As to expression, highly expressed in the jejunum, white adipose tissue, kidney and macrophages.

It localises to the endoplasmic reticulum membrane. The catalysed reaction is a 1-O-(1Z-alkenyl)-sn-glycero-3-phosphocholine + H2O = a 2,3-saturated aldehyde + sn-glycerol 3-phosphocholine. It carries out the reaction a 1-O-(1Z-alkenyl)-sn-glycero-3-phosphoethanolamine + H2O = a 2,3-saturated aldehyde + sn-glycero-3-phosphoethanolamine. Its function is as follows. Catalyzes the hydrolysis of the vinyl ether bond of choline or ethanolamine lysoplasmalogens, forming fatty aldehyde and glycerophosphocholine or glycerophosphoethanolamine, respectively and is specific for the sn-2-deacylated (lyso) form of plasmalogen. Plays an important role in lysoplasmalogen metabolism in the adipocyte tissue and macrophages. This is Lysoplasmalogenase TMEM86A (Tmem86a) from Mus musculus (Mouse).